The following is a 173-amino-acid chain: MATSPVLFLLLAVFAAGASAATFNIKNNCGFTIWPAGIPVGGGFALGSGQTSSINVPAGTQAGRIWARTGCSFNGGSGSCQTGDCGGQLSCSLSGRPPATLAEYTIGGGSTQDFYDISVIDGFNLAMDFSCSTGDALQCRDPSCPPPQAYQHPNDVATHACSGNNNYQITFCP.

Residues 1 to 20 (MATSPVLFLLLAVFAAGASA) form the signal peptide.

This sequence belongs to the thaumatin family.

The protein is Thaumatin-like protein PWIR2 of Triticum aestivum (Wheat).